We begin with the raw amino-acid sequence, 762 residues long: N,N-dimethylformamidase beta subunit (762 aa).

In terms of assembly, heterotetramer of two DmfA1 (alpha) and two DmfA2 (beta) subunits.

It carries out the reaction N,N-dimethylformamide + H2O = dimethylamine + formate. Its function is as follows. Hydrolyzes N,N-dimethylformamide, and to a lesser extent N,N-dimethylacetamide and N,N-diethylacetamide. Has no activity against the substituted amides N-methylformamide, N-ethylformamide, N-ethylformamide and N-methylacetamide or the unsubstituted amides formamide, nicotinamide, acetoamide, benzamide, acetamide and acrylamide. The polypeptide is N,N-dimethylformamidase beta subunit (Paracoccus aminophilus).